A 456-amino-acid chain; its full sequence is GTPase Der (456 aa).

EngA-type G domains are found at residues 3-167 and 185-360; these read FTIA…PPSD and IRVA…AVWN. Residues 9-16, 56-60, and 119-122 contribute to the GTP site; these read GRPNVGKS, DTAGL, and NKSE. The interval 162 to 181 is disordered; that stretch reads IVPPSDDEDDEREETDEERA. Acidic residues predominate over residues 166 to 178; it reads SDDEDDEREETDE. GTP contacts are provided by residues 191–198, 238–242, and 303–306; these read GRPNAGKS, DTAGL, and NKWD. The KH-like domain maps to 361–445; that stretch reads RRVPTAALNR…PVRITLREKA (85 aa).

The protein belongs to the TRAFAC class TrmE-Era-EngA-EngB-Septin-like GTPase superfamily. EngA (Der) GTPase family. As to quaternary structure, associates with the 50S ribosomal subunit.

GTPase that plays an essential role in the late steps of ribosome biogenesis. The sequence is that of GTPase Der from Bradyrhizobium sp. (strain ORS 278).